The following is a 538-amino-acid chain: Lipid scramblase CLPTM1L (538 aa).

Residues 1–10 are Cytoplasmic-facing; that stretch reads MWSGRSSFTS. A helical transmembrane segment spans residues 11-31; sequence LVVGVFVVYVVHTCWVMYGIV. The Extracellular segment spans residues 32–284; that stretch reads YTRPCSGDAN…VKGIFVDTNL (253 aa). 2 N-linked (GlcNAc...) asparagine glycosylation sites follow: Asn-91 and Asn-101. The helical transmembrane segment at 285–305 threads the bilayer; that stretch reads YFLALTFFVAAFHLLFDFLAF. The Cytoplasmic portion of the chain corresponds to 306–324; the sequence is KNDISFWKKKKSMIGMSTK. Residues 325–342 form a helical membrane-spanning segment; sequence AVLWRCFSTVVIFLFLLD. At 343–346 the chain is on the extracellular side; it reads EQTS. A helical membrane pass occupies residues 347–364; it reads LLVLVPAGVGAAIELWKV. Topologically, residues 365 to 402 are cytoplasmic; that stretch reads KKALKMTILWRGLMPEFELGTYSESERKTEEYDTQAMK. The helical transmembrane segment at 403 to 423 threads the bilayer; the sequence is YLSYLLYPLCVGGAVYSLLNI. The Extracellular segment spans residues 424-428; sequence KYKSW. Residues 429-449 form a helical membrane-spanning segment; the sequence is YSWLINSFVNGVYAFGFLFML. Residues 450-538 lie on the Cytoplasmic side of the membrane; the sequence is PQLFVNYKLK…EKAARAPHTD (89 aa).

The protein belongs to the CLPTM1 family.

It localises to the endoplasmic reticulum membrane. The catalysed reaction is a 6-(alpha-D-glucosaminyl)-1-(1,2-diacyl-sn-glycero-3-phospho)-1D-myo-inositol(in) = a 6-(alpha-D-glucosaminyl)-1-(1,2-diacyl-sn-glycero-3-phospho)-1D-myo-inositol(out). It carries out the reaction 6-(alpha-D-glucosaminyl)-(1-octadecanoyl,2-(9Z)-octadecenoyl-sn-glycero-3-phospho)-1D-myo-inositol(in) = 6-(alpha-D-glucosaminyl)-(1-octadecanoyl,2-(9Z)-octadecenoyl-sn-glycero-3-phospho)-1D-myo-inositol(out). The enzyme catalyses a 1,2-diacyl-sn-glycero-3-phospho-(1D-myo-inositol)(in) = a 1,2-diacyl-sn-glycero-3-phospho-(1D-myo-inositol)(out). It catalyses the reaction a 1,2-diacyl-sn-glycero-3-phosphocholine(in) = a 1,2-diacyl-sn-glycero-3-phosphocholine(out). The catalysed reaction is a 1,2-diacyl-sn-glycero-3-phosphoethanolamine(in) = a 1,2-diacyl-sn-glycero-3-phosphoethanolamine(out). Its function is as follows. Scramblase that mediates the translocation of glucosaminylphosphatidylinositol (alpha-D-GlcN-(1-6)-(1,2-diacyl-sn-glycero-3-phospho)-1D-myo-inositol, GlcN-PI) across the endoplasmic reticulum (ER) membrane, from the cytosolic leaflet to the luminal leaflet of the ER membrane, where it participates in the biosynthesis of glycosylphosphatidylinositol (GPI). GPI is a lipid glycoconjugate involved in post-translational modification of proteins. Can also translocate 1,2-diacyl-sn-glycero-3-phospho-(1D-myo-inositol) (phosphatidylinositol or PI), as well as several other phospholipids (1,2-diacyl-sn-glycero-3-phosphocholine, 1,2-diacyl-sn-glycero-3-phosphoethanolamine), and N-acetylglucosaminylphosphatidylinositol (GlcNAc-PI) in vitro. The chain is Lipid scramblase CLPTM1L (CLPTM1L) from Pongo abelii (Sumatran orangutan).